The chain runs to 354 residues: Rhodopsin (354 aa).

At 1-36 (MNGTEGPMFYVPMSNATGVVKSPYDYPQYYLVAPWA) the chain is on the extracellular side. N-linked (GlcNAc...) asparagine glycans are attached at residues Asn-2 and Asn-15. A helical membrane pass occupies residues 37-61 (YGCLAAYMFFLIITGFPINFLTLYV). The Cytoplasmic portion of the chain corresponds to 62–73 (TIEHKKLRTPLN). A helical membrane pass occupies residues 74–96 (YILLNLAISDLFMVFGGFTTTMY). The Extracellular segment spans residues 97–110 (TSLHGYFVFGRIGC). The cysteines at positions 110 and 187 are disulfide-linked. A helical membrane pass occupies residues 111–133 (NLEGFFATLGGEMGLWSLVVLAF). A 'Ionic lock' involved in activated form stabilization motif is present at residues 134–136 (ERW). At 134–152 (ERWMVVCKPVSNFRFGENH) the chain is on the cytoplasmic side. A helical transmembrane segment spans residues 153-173 (AIMGVVFTWFMACTCAVPPLV). Residues 174–202 (GWSRYIPEGMQCSCGVDYYTRAPGYNNES) are Extracellular-facing. The helical transmembrane segment at 203 to 224 (FVIYMFLVHFIIPLIVIFFCYG) threads the bilayer. The Cytoplasmic portion of the chain corresponds to 225–252 (RLVCTVKDAAAQQQESETTQRAEREVTR). A helical membrane pass occupies residues 253 to 274 (MVVIMVIGFLICWIPYASVAWY). The Extracellular portion of the chain corresponds to 275–286 (IFTHQGSEFGPV). The helical transmembrane segment at 287 to 308 (FMTVPAFFAKSAAVYNPCIYIC) threads the bilayer. Lys-296 carries the post-translational modification N6-(retinylidene)lysine. At 309 to 354 (MNKQFRHCMITTLCCGKNPFEEEEGASTTASKTEASSVSSSSVSPA) the chain is on the cytoplasmic side. 2 S-palmitoyl cysteine lipidation sites follow: Cys-322 and Cys-323. The interval 333–354 (GASTTASKTEASSVSSSSVSPA) is disordered. Over residues 334-354 (ASTTASKTEASSVSSSSVSPA) the composition is skewed to low complexity.

It belongs to the G-protein coupled receptor 1 family. Opsin subfamily. Phosphorylated on some or all of the serine and threonine residues present in the C-terminal region. Post-translationally, contains one covalently linked retinal chromophore.

It localises to the membrane. The protein resides in the cell projection. Its subcellular location is the cilium. It is found in the photoreceptor outer segment. Its function is as follows. Photoreceptor required for image-forming vision at low light intensity. While most salt water fish species use retinal as chromophore, most freshwater fish use 3-dehydroretinal, or a mixture of retinal and 3-dehydroretinal. Light-induced isomerization of 11-cis to all-trans retinal triggers a conformational change that activates signaling via G-proteins. Subsequent receptor phosphorylation mediates displacement of the bound G-protein alpha subunit by arrestin and terminates signaling. This chain is Rhodopsin (rho), found in Cyprinus carpio (Common carp).